We begin with the raw amino-acid sequence, 436 residues long: 3-ketoacyl-CoA thiolase (436 aa).

Cysteine 99 acts as the Acyl-thioester intermediate in catalysis. Active-site proton acceptor residues include histidine 392 and cysteine 422.

It belongs to the thiolase-like superfamily. Thiolase family. As to quaternary structure, heterotetramer of two alpha chains (FadJ) and two beta chains (FadI).

The protein localises to the cytoplasm. It carries out the reaction an acyl-CoA + acetyl-CoA = a 3-oxoacyl-CoA + CoA. It functions in the pathway lipid metabolism; fatty acid beta-oxidation. Functionally, catalyzes the final step of fatty acid oxidation in which acetyl-CoA is released and the CoA ester of a fatty acid two carbons shorter is formed. This Shewanella piezotolerans (strain WP3 / JCM 13877) protein is 3-ketoacyl-CoA thiolase.